Here is a 416-residue protein sequence, read N- to C-terminus: MHKRRRLLAFATVGAVICTAGFTPSVSQAASSGDGEEKGSYAETHGLTADDVESINALNERALTLGQPGKPPKELPPSASAPSRAPSDDRETPPAEPLDRMPEAYRAYGGRATTVVNNYIRKWQQVYSHRDGKKQQMTEEQREKLSYGCVGVTWVNSGPYPTNRLAFASFDENKYKNDLKNTSPRPDETRAEFEGRIAKGSFDEGKGFKRARDVASVMNKALENAHDEGTYINNLKTELTNNNDALLREDSRSNFYSALRNTPSFKERDGGNYDPSKMKAVIYSKHFWSGQDQRGSSDKRKYGDPEAFRPDQGTGLVDMSKDRSIPRSPAKPGEGWVNFDYGWFGAQTEADADKTTWTHGDHYHAPNSDLGPMHVHESKFRKWSAGYADFDRGAYVITFIPKSWNTAPAKVEQGWP.

A signal peptide (tat-type signal) is located at residues 1–29 (MHKRRRLLAFATVGAVICTAGFTPSVSQA). Residues 30–85 (ASSGDGEEKGSYAETHGLTADDVESINALNERALTLGQPGKPPKELPPSASAPSRA) constitute a propeptide that is removed on maturation. The disordered stretch occupies residues 64–103 (TLGQPGKPPKELPPSASAPSRAPSDDRETPPAEPLDRMPE). The span at 76–85 (PPSASAPSRA) shows a compositional bias: low complexity. Residues 86–103 (PSDDRETPPAEPLDRMPE) are compositionally biased toward basic and acidic residues. C149 is an active-site residue. A disordered region spans residues 290-331 (GQDQRGSSDKRKYGDPEAFRPDQGTGLVDMSKDRSIPRSPAK). Basic and acidic residues predominate over residues 295–309 (GSSDKRKYGDPEAFR). Catalysis depends on residues D340 and H359.

The protein belongs to the bacterial TGase family. In terms of processing, predicted to be exported by the Tat system. The position of the signal peptide cleavage has not been experimentally proven.

The enzyme catalyses L-glutaminyl-[protein] + L-lysyl-[protein] = [protein]-L-lysyl-N(6)-5-L-glutamyl-[protein] + NH4(+). Its function is as follows. Catalyzes the cross-linking of proteins and the conjugation of polyamines to proteins. In Streptomyces cinnamoneus (Streptoverticillium cinnamoneum), this protein is Protein-glutamine gamma-glutamyltransferase.